Here is a 101-residue protein sequence, read N- to C-terminus: NAD(P)H-quinone oxidoreductase subunit 4L, chloroplastic (101 aa).

Helical transmembrane passes span 2 to 22, 32 to 52, and 61 to 81; these read MLEHELVLSAYLFSIGIYGLI, MCLELILNAVNMNLVTFSDLF, and IFSIFVIAIAAAEAAIGPAIV.

The protein belongs to the complex I subunit 4L family. In terms of assembly, NDH is composed of at least 16 different subunits, 5 of which are encoded in the nucleus.

The protein localises to the plastid. It localises to the chloroplast thylakoid membrane. The catalysed reaction is a plastoquinone + NADH + (n+1) H(+)(in) = a plastoquinol + NAD(+) + n H(+)(out). It carries out the reaction a plastoquinone + NADPH + (n+1) H(+)(in) = a plastoquinol + NADP(+) + n H(+)(out). NDH shuttles electrons from NAD(P)H:plastoquinone, via FMN and iron-sulfur (Fe-S) centers, to quinones in the photosynthetic chain and possibly in a chloroplast respiratory chain. The immediate electron acceptor for the enzyme in this species is believed to be plastoquinone. Couples the redox reaction to proton translocation, and thus conserves the redox energy in a proton gradient. This is NAD(P)H-quinone oxidoreductase subunit 4L, chloroplastic from Ceratophyllum demersum (Rigid hornwort).